The sequence spans 441 residues: Ribulose bisphosphate carboxylase (441 aa).

K160 functions as the Proton acceptor in the catalytic mechanism. Residue K162 participates in substrate binding. Residues K186, D188, and E189 each coordinate Mg(2+). An N6-carboxylysine modification is found at K186. Catalysis depends on H278, which acts as the Proton acceptor. Residues R279, H311, S364–G366, and Q386–G389 contribute to the substrate site.

Belongs to the RuBisCO large chain family. Type III subfamily. Homodimer. In contrast to form I RuBisCO, the form III RuBisCO is composed solely of large subunits. Requires Mg(2+) as cofactor.

It carries out the reaction 2 (2R)-3-phosphoglycerate + 2 H(+) = D-ribulose 1,5-bisphosphate + CO2 + H2O. The catalysed reaction is D-ribulose 1,5-bisphosphate + O2 = 2-phosphoglycolate + (2R)-3-phosphoglycerate + 2 H(+). Reversibly inhibited by O(2). In terms of biological role, catalyzes the addition of molecular CO(2) and H(2)O to ribulose 1,5-bisphosphate (RuBP), generating two molecules of 3-phosphoglycerate (3-PGA). Functions in an archaeal AMP degradation pathway, together with AMP phosphorylase and R15P isomerase. This Archaeoglobus fulgidus (strain ATCC 49558 / DSM 4304 / JCM 9628 / NBRC 100126 / VC-16) protein is Ribulose bisphosphate carboxylase.